The following is a 219-amino-acid chain: Response regulator ArlR (219 aa).

The Response regulatory domain occupies 3–116 (NILIVEDEQN…ELLARIRAVL (114 aa)). Residue Asp52 is modified to 4-aspartylphosphate. Residues 122–219 (KDVLDINGII…TVRGVGYVIR (98 aa)) constitute a DNA-binding region (ompR/PhoB-type).

Phosphorylated by ArlS.

Its subcellular location is the cytoplasm. Its function is as follows. Member of the two-component regulatory system ArlS/ArlR. This chain is Response regulator ArlR (arlR), found in Staphylococcus epidermidis (strain ATCC 35984 / DSM 28319 / BCRC 17069 / CCUG 31568 / BM 3577 / RP62A).